We begin with the raw amino-acid sequence, 290 residues long: ATP synthase gamma chain (290 aa).

It belongs to the ATPase gamma chain family. In terms of assembly, F-type ATPases have 2 components, CF(1) - the catalytic core - and CF(0) - the membrane proton channel. CF(1) has five subunits: alpha(3), beta(3), gamma(1), delta(1), epsilon(1). CF(0) has three main subunits: a, b and c.

Its subcellular location is the cell inner membrane. Produces ATP from ADP in the presence of a proton gradient across the membrane. The gamma chain is believed to be important in regulating ATPase activity and the flow of protons through the CF(0) complex. This is ATP synthase gamma chain from Chelativorans sp. (strain BNC1).